The primary structure comprises 206 residues: Probable N-acetyltransferase 14 (206 aa).

Residues L6 to L206 form the N-acetyltransferase domain. A helical transmembrane segment spans residues F57–V77.

The protein belongs to the camello family. In terms of tissue distribution, expressed in K-562 and HeLa cell lines and in brain.

It is found in the membrane. Probable acetyltransferase. In terms of biological role, may act as a transcription factor that regulates the expression of coproporphyrinogen oxidase by binding to a promoter regulatory element. The protein is Probable N-acetyltransferase 14 (NAT14) of Homo sapiens (Human).